The following is a 131-amino-acid chain: Profilin-7 (131 aa).

Cys13 and Cys115 are oxidised to a cystine. Residues 81 to 97 carry the Involved in PIP2 interaction motif; that stretch reads AVIRGKKGAGGITIKKT. At Thr111 the chain carries Phosphothreonine.

It belongs to the profilin family. In terms of assembly, occurs in many kinds of cells as a complex with monomeric actin in a 1:1 ratio. Post-translationally, phosphorylated by MAP kinases.

The protein localises to the cytoplasm. Its subcellular location is the cytoskeleton. Binds to actin and affects the structure of the cytoskeleton. At high concentrations, profilin prevents the polymerization of actin, whereas it enhances it at low concentrations. The polypeptide is Profilin-7 (Phleum pratense (Common timothy)).